A 340-amino-acid polypeptide reads, in one-letter code: Zinc finger protein 367 (340 aa).

Residues 101-140 form a disordered region; sequence GAPQSSASVAAVSGGEDEEEASSPDSGHLKDGIRRGRPRA. The segment covering 127–140 has biased composition (basic and acidic residues); that stretch reads GHLKDGIRRGRPRA. 2 consecutive C2H2-type zinc fingers follow at residues 157–179 and 185–209; these read IRCN…KRTH and YLCD…QRLH. The segment at 280–317 is disordered; that stretch reads KGKLVQKADQEQQDPLEYLQSDEEDDEKSGAQRRLQEQ. Residues 299–332 adopt a coiled-coil conformation; it reads QSDEEDDEKSGAQRRLQEQRERLHGALALIELAN. At serine 300 the chain carries Phosphoserine. Residues 307–317 show a composition bias toward basic and acidic residues; sequence KSGAQRRLQEQ.

It belongs to the krueppel C2H2-type zinc-finger protein family. As to expression, expressed in bone marrow and ovary.

It is found in the nucleus. In terms of biological role, transcriptional activator. Isoform 1 may be involved in transcriptional activation of erythroid genes. This chain is Zinc finger protein 367 (Znf367), found in Mus musculus (Mouse).